Here is a 374-residue protein sequence, read N- to C-terminus: uncharacterized protein (374 aa).

An N-terminal signal peptide occupies residues 1–23; it reads MDSKWFFIVLISFLLVLPSIVTP. The disordered stretch occupies residues 66–374; it reads SSSSSSSSSS…SSSSSSSGEN (309 aa).

It is found in the secreted. This is an uncharacterized protein from Dictyostelium discoideum (Social amoeba).